The sequence spans 499 residues: Protein nucleotidyltransferase YdiU (499 aa).

Positions 95, 97, 98, 117, 129, 130, 180, and 187 each coordinate ATP. Asp256 serves as the catalytic Proton acceptor. Residues Asn257 and Asp266 each coordinate Mg(2+). Asp266 is a binding site for ATP.

Belongs to the SELO family. Requires Mg(2+) as cofactor. Mn(2+) serves as cofactor.

It carries out the reaction L-seryl-[protein] + ATP = 3-O-(5'-adenylyl)-L-seryl-[protein] + diphosphate. The catalysed reaction is L-threonyl-[protein] + ATP = 3-O-(5'-adenylyl)-L-threonyl-[protein] + diphosphate. It catalyses the reaction L-tyrosyl-[protein] + ATP = O-(5'-adenylyl)-L-tyrosyl-[protein] + diphosphate. The enzyme catalyses L-histidyl-[protein] + UTP = N(tele)-(5'-uridylyl)-L-histidyl-[protein] + diphosphate. It carries out the reaction L-seryl-[protein] + UTP = O-(5'-uridylyl)-L-seryl-[protein] + diphosphate. The catalysed reaction is L-tyrosyl-[protein] + UTP = O-(5'-uridylyl)-L-tyrosyl-[protein] + diphosphate. Functionally, nucleotidyltransferase involved in the post-translational modification of proteins. It can catalyze the addition of adenosine monophosphate (AMP) or uridine monophosphate (UMP) to a protein, resulting in modifications known as AMPylation and UMPylation. The sequence is that of Protein nucleotidyltransferase YdiU from Dechloromonas aromatica (strain RCB).